A 1013-amino-acid polypeptide reads, in one-letter code: Tolloid-like protein 1 (1013 aa).

Residues Met-1 to Gly-30 form the signal peptide. A propeptide spanning residues Leu-31–Arg-147 is cleaved from the precursor. Positions Ala-148–Pro-347 constitute a Peptidase M12A domain. Asn-169 is a glycosylation site (N-linked (GlcNAc...) asparagine). Intrachain disulfides connect Cys-190-Cys-346, Cys-210-Cys-232, Cys-212-Cys-213, and Cys-349-Cys-375. Residue His-240 participates in Zn(2+) binding. The active site involves Glu-241. 2 residues coordinate Zn(2+): His-244 and His-250. CUB domains are found at residues Cys-349 to Ile-461 and Cys-462 to Glu-574. N-linked (GlcNAc...) asparagine glycosylation is found at Asn-359 and Asn-390. 15 cysteine pairs are disulfide-bonded: Cys-402–Cys-424, Cys-462–Cys-488, Cys-515–Cys-537, Cys-578–Cys-590, Cys-586–Cys-599, Cys-601–Cys-614, Cys-618–Cys-644, Cys-671–Cys-693, Cys-734–Cys-745, Cys-741–Cys-754, Cys-756–Cys-769, Cys-774–Cys-800, Cys-827–Cys-849, Cys-887–Cys-917, and Cys-944–Cys-966. The EGF-like 1; calcium-binding domain maps to Glu-574 to Glu-615. Positions Cys-618–Asp-730 constitute a CUB 3 domain. The N-linked (GlcNAc...) asparagine glycan is linked to Asn-626. The 41-residue stretch at Asp-730–Lys-770 folds into the EGF-like 2; calcium-binding domain. CUB domains are found at residues Cys-774–Glu-886 and Cys-887–Ile-1003.

Requires Zn(2+) as cofactor.

The protein localises to the secreted. In terms of biological role, protease which processes procollagen C-propeptides, such as chordin, pro-biglycan and pro-lysyl oxidase. Required for the embryonic development. Predominant protease, which in the development, influences dorsal-ventral patterning and skeletogenesis. In Homo sapiens (Human), this protein is Tolloid-like protein 1 (TLL1).